The primary structure comprises 122 residues: uncharacterized protein (122 aa).

This is an uncharacterized protein from Human adenovirus F serotype 41 (HAdV-41).